The sequence spans 288 residues: Ribosomal RNA small subunit methyltransferase A (288 aa).

6 residues coordinate S-adenosyl-L-methionine: N28, L30, G55, E77, D103, and N123.

The protein belongs to the class I-like SAM-binding methyltransferase superfamily. rRNA adenine N(6)-methyltransferase family. RsmA subfamily.

The protein localises to the cytoplasm. The enzyme catalyses adenosine(1518)/adenosine(1519) in 16S rRNA + 4 S-adenosyl-L-methionine = N(6)-dimethyladenosine(1518)/N(6)-dimethyladenosine(1519) in 16S rRNA + 4 S-adenosyl-L-homocysteine + 4 H(+). Functionally, specifically dimethylates two adjacent adenosines (A1518 and A1519) in the loop of a conserved hairpin near the 3'-end of 16S rRNA in the 30S particle. May play a critical role in biogenesis of 30S subunits. The chain is Ribosomal RNA small subunit methyltransferase A from Xanthobacter autotrophicus (strain ATCC BAA-1158 / Py2).